The primary structure comprises 127 residues: Small ribosomal subunit protein uS13 (127 aa).

The segment at 95–127 is disordered; it reads GLPVHGQRTSTNARTRKGPRRAAVKKKGGAKKK. Over residues 108 to 127 the composition is skewed to basic residues; the sequence is RTRKGPRRAAVKKKGGAKKK.

It belongs to the universal ribosomal protein uS13 family. As to quaternary structure, part of the 30S ribosomal subunit. Forms a loose heterodimer with protein S19. Forms two bridges to the 50S subunit in the 70S ribosome.

Functionally, located at the top of the head of the 30S subunit, it contacts several helices of the 16S rRNA. In the 70S ribosome it contacts the 23S rRNA (bridge B1a) and protein L5 of the 50S subunit (bridge B1b), connecting the 2 subunits; these bridges are implicated in subunit movement. Contacts the tRNAs in the A and P-sites. This is Small ribosomal subunit protein uS13 from Desulfatibacillum aliphaticivorans.